The following is an 80-amino-acid chain: Cell division protein ZapB (80 aa).

Positions 3-80 (LEILEQLEAK…GLLGKMEEVE (78 aa)) form a coiled coil. Residues 41 to 62 (LEQANNGRSEVEQEAQKARDEQ) form a disordered region. The span at 49 to 62 (SEVEQEAQKARDEQ) shows a compositional bias: basic and acidic residues.

This sequence belongs to the ZapB family. Homodimer. The ends of the coiled-coil dimer bind to each other, forming polymers. Interacts with FtsZ.

The protein localises to the cytoplasm. In terms of biological role, non-essential, abundant cell division factor that is required for proper Z-ring formation. It is recruited early to the divisome by direct interaction with FtsZ, stimulating Z-ring assembly and thereby promoting cell division earlier in the cell cycle. Its recruitment to the Z-ring requires functional FtsA or ZipA. In Aliivibrio salmonicida (strain LFI1238) (Vibrio salmonicida (strain LFI1238)), this protein is Cell division protein ZapB.